The sequence spans 609 residues: Chaperone protein DnaK (609 aa).

The residue at position 173 (threonine 173) is a Phosphothreonine; by autocatalysis. The span at 525 to 542 (ENISDEDKKNAEEKKDAL) shows a compositional bias: basic and acidic residues. Disordered stretches follow at residues 525–554 (ENIS…IDDI) and 574–609 (EQAQ…EDKK). Positions 574–587 (EQAQQAQQQGQEEQ) are enriched in low complexity. Basic and acidic residues predominate over residues 597–609 (ADFKEVKDDEDKK).

This sequence belongs to the heat shock protein 70 family.

Its function is as follows. Acts as a chaperone. The chain is Chaperone protein DnaK from Staphylococcus epidermidis (strain ATCC 35984 / DSM 28319 / BCRC 17069 / CCUG 31568 / BM 3577 / RP62A).